Consider the following 118-residue polypeptide: Small ribosomal subunit protein uS13 (118 aa).

The segment at 91–118 (HRRSLPVRGQRTKTNARTRKGPRKPIRK) is disordered.

The protein belongs to the universal ribosomal protein uS13 family. As to quaternary structure, part of the 30S ribosomal subunit. Forms a loose heterodimer with protein S19. Forms two bridges to the 50S subunit in the 70S ribosome.

In terms of biological role, located at the top of the head of the 30S subunit, it contacts several helices of the 16S rRNA. In the 70S ribosome it contacts the 23S rRNA (bridge B1a) and protein L5 of the 50S subunit (bridge B1b), connecting the 2 subunits; these bridges are implicated in subunit movement. Contacts the tRNAs in the A and P-sites. The sequence is that of Small ribosomal subunit protein uS13 from Marinomonas sp. (strain MWYL1).